The primary structure comprises 267 residues: Soluble interferon gamma receptor OPG193 (267 aa).

Positions 1-17 (MRYIIILAVLFINSIHA) are cleaved as a signal peptide. N-linked (GlcNAc...) asparagine; by host glycans are attached at residues Asn-42 and Asn-150.

This sequence belongs to the type II cytokine receptor family. In terms of assembly, homodimer. Interacts with host IFNG.

The protein localises to the secreted. Its function is as follows. Counteracts the antiviral effects of host IFN-gamma. Acts as a soluble IFN-gamma receptor and thus inhibits the interaction between host IFN-gamma and its receptor. The chain is Soluble interferon gamma receptor OPG193 (OPG193) from Cynomys gunnisoni (Gunnison's prairie dog).